A 1045-amino-acid chain; its full sequence is Extracellular serine protease (1045 aa).

The signal sequence occupies residues 1-27 (MILNKKLKLAYCVFLGCYGLSLHSSLA). The 348-residue stretch at 49–396 (QWGLEAISAE…WGRVNLRDAI (348 aa)) folds into the Peptidase S8 domain. Active-site charge relay system residues include Asp-76, His-112, and Ser-341. A propeptide spanning residues 646–1045 (SLASTENDKE…SVNAGLTWRF (400 aa)) is cleaved from the precursor. One can recognise an Autotransporter domain in the interval 769–1045 (IKADDNGAWA…SVNAGLTWRF (277 aa)).

Belongs to the peptidase S8 family.

Its subcellular location is the secreted. This chain is Extracellular serine protease, found in Serratia marcescens.